We begin with the raw amino-acid sequence, 323 residues long: Melanocortin receptor 3 (323 aa).

The Extracellular portion of the chain corresponds to 1 to 37 (MNASCCLPSVQPTLPNGSEHLQAPFFSNQSSSAFCEQ). N-linked (GlcNAc...) asparagine glycosylation is found at Asn-2, Asn-16, and Asn-28. A helical transmembrane segment spans residues 38–63 (VFIKPEVFLSLGIVSLLENILVILAV). The Cytoplasmic segment spans residues 64–75 (VRNGNLHSPMYF). Residues 76-100 (FLCSLAVADMLVSVSNALETIMIAI) form a helical membrane-spanning segment. At 101–118 (VHSDYLTFEDQFIQHMDN) the chain is on the extracellular side. The chain crosses the membrane as a helical span at residues 119–140 (IFDSMICISLVASICNLLAIAV). Residues 141–160 (DRYVTIFYALRYHSIMTVRK) are Cytoplasmic-facing. Residues 161–181 (ALTLIVAIWVCCGVCGVVFIV) form a helical membrane-spanning segment. Residues 182–186 (YSESK) lie on the Extracellular side of the membrane. Residues 187 to 210 (MVIVCLITMFFAMMLLMGTLYVHM) form a helical membrane-spanning segment. At 211-245 (FLFARLHVKRIAALPPADGVAPQQHSCMKGAVTIT) the chain is on the cytoplasmic side. Residues 246 to 268 (ILLGVFIFCWAPFFLHLVLIITC) form a helical membrane-spanning segment. At 269 to 277 (PTNPYCICY) the chain is on the extracellular side. A helical transmembrane segment spans residues 278–301 (TAHFNTYLVLIMCNSVIDPLIYAF). Over 302–323 (RSLELRNTFREILCGCNGMNLG) the chain is Cytoplasmic. The S-palmitoyl cysteine moiety is linked to residue Cys-315.

It belongs to the G-protein coupled receptor 1 family. As to expression, brain, placental, and gut tissues.

The protein resides in the cell membrane. Functionally, receptor for MSH (alpha, beta and gamma) and ACTH. This receptor is mediated by G proteins which activate adenylate cyclase. Required for expression of anticipatory patterns of activity and wakefulness during periods of limited nutrient availability and for the normal regulation of circadian clock activity in the brain. This is Melanocortin receptor 3 (MC3R) from Homo sapiens (Human).